A 306-amino-acid polypeptide reads, in one-letter code: Pre-mRNA-splicing factor cwf26 (306 aa).

Residues 130–152 (KAEERRKREEKSSNLDEEELRKS) form a disordered region. Residues 130-198 (KAEERRKREE…KEQQQGVVQV (69 aa)) adopt a coiled-coil conformation.

Belongs to the CWC26 family. In terms of assembly, belongs to the 40S cdc5-associated complex (or cwf complex), a spliceosome sub-complex reminiscent of a late-stage spliceosome composed of the U2, U5 and U6 snRNAs and at least brr2, cdc5, cwf2/prp3, cwf3/syf1, cwf4/syf3, cwf5/ecm2, spp42/cwf6, cwf7/spf27, cwf8, cwf9, cwf10, cwf11, cwf12, prp45/cwf13, cwf14, cwf15, cwf16, cwf17, cwf18, cwf19, cwf20, cwf21, cwf22, cwf23, cwf24, cwf25, cwf26, cyp7/cwf27, cwf28, cwf29/ist3, lea1, msl1, prp5/cwf1, prp10, prp12/sap130, prp17, prp22, sap61, sap62, sap114, sap145, slu7, smb1, smd1, smd3, smf1, smg1 and syf2.

It localises to the cytoplasm. The protein resides in the nucleus. In terms of biological role, involved in mRNA splicing. This chain is Pre-mRNA-splicing factor cwf26 (cwf26), found in Schizosaccharomyces pombe (strain 972 / ATCC 24843) (Fission yeast).